The sequence spans 404 residues: Argininosuccinate synthase (404 aa).

Residues 10–18 (AYSGGLDTS) and Ala-37 contribute to the ATP site. Tyr-90 and Ser-95 together coordinate L-citrulline. Gly-120 is an ATP binding site. 3 residues coordinate L-aspartate: Thr-122, Asn-126, and Asp-127. Asn-126 is an L-citrulline binding site. 5 residues coordinate L-citrulline: Arg-130, Ser-180, Ser-189, Glu-265, and Tyr-277.

The protein belongs to the argininosuccinate synthase family. Type 1 subfamily. Homotetramer.

It is found in the cytoplasm. It catalyses the reaction L-citrulline + L-aspartate + ATP = 2-(N(omega)-L-arginino)succinate + AMP + diphosphate + H(+). It participates in amino-acid biosynthesis; L-arginine biosynthesis; L-arginine from L-ornithine and carbamoyl phosphate: step 2/3. The chain is Argininosuccinate synthase from Helicobacter hepaticus (strain ATCC 51449 / 3B1).